The sequence spans 157 residues: Crossover junction endodeoxyribonuclease RuvC (157 aa).

Active-site residues include Asp-7, Glu-67, and Asp-140. Residues Asp-7, Glu-67, and Asp-140 each coordinate Mg(2+).

This sequence belongs to the RuvC family. As to quaternary structure, homodimer which binds Holliday junction (HJ) DNA. The HJ becomes 2-fold symmetrical on binding to RuvC with unstacked arms; it has a different conformation from HJ DNA in complex with RuvA. In the full resolvosome a probable DNA-RuvA(4)-RuvB(12)-RuvC(2) complex forms which resolves the HJ. Requires Mg(2+) as cofactor.

It is found in the cytoplasm. It catalyses the reaction Endonucleolytic cleavage at a junction such as a reciprocal single-stranded crossover between two homologous DNA duplexes (Holliday junction).. The RuvA-RuvB-RuvC complex processes Holliday junction (HJ) DNA during genetic recombination and DNA repair. Endonuclease that resolves HJ intermediates. Cleaves cruciform DNA by making single-stranded nicks across the HJ at symmetrical positions within the homologous arms, yielding a 5'-phosphate and a 3'-hydroxyl group; requires a central core of homology in the junction. The consensus cleavage sequence is 5'-(A/T)TT(C/G)-3'. Cleavage occurs on the 3'-side of the TT dinucleotide at the point of strand exchange. HJ branch migration catalyzed by RuvA-RuvB allows RuvC to scan DNA until it finds its consensus sequence, where it cleaves and resolves the cruciform DNA. This chain is Crossover junction endodeoxyribonuclease RuvC, found in Rickettsia africae (strain ESF-5).